We begin with the raw amino-acid sequence, 350 residues long: Bifunctional methylenetetrahydrofolate dehydrogenase/cyclohydrolase, mitochondrial (350 aa).

A mitochondrion-targeting transit peptide spans 1-35 (MASVSLLSALAVRLLRPTHGCHPRLQPFHLAAVRN). An N6-acetyllysine; alternate modification is found at Lys-50. Lys-50 is covalently cross-linked (Glycyl lysine isopeptide (Lys-Gly) (interchain with G-Cter in SUMO2); alternate). Residues 84 to 88 (YVLNK) and 131 to 133 (VQL) contribute to the substrate site. NAD(+) is bound by residues 200 to 202 (GRS) and Arg-233. 309-313 (PGGVG) is a substrate binding site.

This sequence belongs to the tetrahydrofolate dehydrogenase/cyclohydrolase family. As to quaternary structure, homodimer. Mg(2+) is required as a cofactor.

It is found in the mitochondrion. It catalyses the reaction (6R)-5,10-methylene-5,6,7,8-tetrahydrofolate + NAD(+) = (6R)-5,10-methenyltetrahydrofolate + NADH. The enzyme catalyses (6R)-5,10-methenyltetrahydrofolate + H2O = (6R)-10-formyltetrahydrofolate + H(+). In terms of biological role, although its dehydrogenase activity is NAD-specific, it can also utilize NADP at a reduced efficiency. In Mus musculus (Mouse), this protein is Bifunctional methylenetetrahydrofolate dehydrogenase/cyclohydrolase, mitochondrial (Mthfd2).